We begin with the raw amino-acid sequence, 241 residues long: Platelet-derived growth factor subunit B (241 aa).

Residues Met1–Ala20 form the signal peptide. The propeptide at Glu21–Arg81 is removed in mature form. An N-linked (GlcNAc...) asparagine glycan is attached at Asn63. Cystine bridges form between Cys97/Cys141, Cys130/Cys178, and Cys134/Cys180. The propeptide at Thr191–Ala241 is removed in mature form. A compositionally biased stretch (basic residues) spans Arg217 to His230. Residues Arg217–Ala241 are disordered.

This sequence belongs to the PDGF/VEGF growth factor family. As to quaternary structure, antiparallel homodimer; disulfide-linked. Antiparallel heterodimer with PDGFA; disulfide-linked. The PDGFB homodimer interacts with PDGFRA and PDGFRB homodimers, and with heterodimers formed by PDGFRA and PDGFRB. The heterodimer composed of PDGFA and PDGFB interacts with PDGFRB homodimers, and with heterodimers formed by PDGFRA and PDGFRB. Interacts with XLKD1. Interacts with LRP1. Interacts with SORL1 (via the N-terminal ectodomain). Interacts with CD82; this interaction inhibits PDGFB-mediated signaling pathway.

The protein localises to the secreted. Its function is as follows. Growth factor that plays an essential role in the regulation of embryonic development, cell proliferation, cell migration, survival and chemotaxis. Potent mitogen for cells of mesenchymal origin. Required for normal proliferation and recruitment of pericytes and vascular smooth muscle cells in the central nervous system, skin, lung, heart and placenta. Required for normal blood vessel development, and for normal development of kidney glomeruli. Plays an important role in wound healing. Signaling is modulated by the formation of heterodimers with PDGFA. This is Platelet-derived growth factor subunit B (PDGFB) from Ovis aries (Sheep).